The sequence spans 416 residues: Multifunctional CCA protein (416 aa).

2 residues coordinate ATP: Gly8 and Arg11. CTP contacts are provided by Gly8 and Arg11. Residues Asp21 and Asp23 each contribute to the Mg(2+) site. ATP contacts are provided by Arg91, Arg137, and Arg140. Residues Arg91, Arg137, and Arg140 each coordinate CTP. The 108-residue stretch at Ser228–Trp335 folds into the HD domain.

This sequence belongs to the tRNA nucleotidyltransferase/poly(A) polymerase family. Bacterial CCA-adding enzyme type 1 subfamily. Monomer. Can also form homodimers and oligomers. Mg(2+) is required as a cofactor. It depends on Ni(2+) as a cofactor.

It carries out the reaction a tRNA precursor + 2 CTP + ATP = a tRNA with a 3' CCA end + 3 diphosphate. The catalysed reaction is a tRNA with a 3' CCA end + 2 CTP + ATP = a tRNA with a 3' CCACCA end + 3 diphosphate. In terms of biological role, catalyzes the addition and repair of the essential 3'-terminal CCA sequence in tRNAs without using a nucleic acid template. Adds these three nucleotides in the order of C, C, and A to the tRNA nucleotide-73, using CTP and ATP as substrates and producing inorganic pyrophosphate. tRNA 3'-terminal CCA addition is required both for tRNA processing and repair. Also involved in tRNA surveillance by mediating tandem CCA addition to generate a CCACCA at the 3' terminus of unstable tRNAs. While stable tRNAs receive only 3'-terminal CCA, unstable tRNAs are marked with CCACCA and rapidly degraded. The polypeptide is Multifunctional CCA protein (Haemophilus influenzae (strain PittGG)).